The chain runs to 442 residues: 3-isopropylmalate dehydratase large subunit (442 aa).

The [4Fe-4S] cluster site is built by Xaa-347, Cys-407, and Cys-410.

This sequence belongs to the aconitase/IPM isomerase family. LeuC type 1 subfamily. In terms of assembly, heterodimer of LeuC and LeuD. [4Fe-4S] cluster serves as cofactor.

It carries out the reaction (2R,3S)-3-isopropylmalate = (2S)-2-isopropylmalate. Its pathway is amino-acid biosynthesis; L-leucine biosynthesis; L-leucine from 3-methyl-2-oxobutanoate: step 2/4. In terms of biological role, catalyzes the isomerization between 2-isopropylmalate and 3-isopropylmalate, via the formation of 2-isopropylmaleate. The protein is 3-isopropylmalate dehydratase large subunit of Buchnera aphidicola subsp. Macrosiphoniella ludovicianae.